The sequence spans 542 residues: Cytochrome P450 27C1 (542 aa).

The N-terminal 80 residues, 1–80 (MQTSAMALLA…LAAMPGPRTL (80 aa)), are a transit peptide targeting the mitochondrion. Residues 20–75 (APERGGLLGGGAPRRPQPAGARLPAGARAEDKGAGRPGSPPGGGRAEGPRSLAAMP) form a disordered region. Residues 32 to 46 (PRRPQPAGARLPAGA) are compositionally biased toward low complexity. Heme is bound at residue Cys-488.

Belongs to the cytochrome P450 family. The cofactor is heme. In terms of tissue distribution, widely expressed, with highest levels in the liver, kidney and pancreas. As to expression, expressed in the skin (at protein level).

The protein resides in the mitochondrion membrane. It catalyses the reaction all-trans-retinol + 2 reduced [adrenodoxin] + O2 + 2 H(+) = all-trans-3,4-didehydroretinol + 2 oxidized [adrenodoxin] + 2 H2O. It carries out the reaction all-trans-retinol + 2 reduced [adrenodoxin] + O2 + 2 H(+) = all-trans-4-hydroxyretinol + 2 oxidized [adrenodoxin] + H2O. The enzyme catalyses all-trans-retinol + 2 reduced [adrenodoxin] + O2 + 2 H(+) = all-trans-3-hydroxyretinol + 2 oxidized [adrenodoxin] + H2O. It functions in the pathway cofactor metabolism; retinol metabolism. Its function is as follows. A cytochrome P450 monooxygenase that catalyzes the 3,4 desaturation of all-trans-retinol (also called vitamin A1) to all-trans-3,4-didehydroretinol (also called vitamin A2) in the skin. Desaturates with lower efficiency all-trans retinal and all-trans retinoic acid. Forms minor amounts of 3-hydroxy and 4-hydroxy all-trans-retinol derivatives. Mechanistically, uses molecular oxygen inserting one oxygen atom into a substrate and reducing the second into a water molecule. Two electrons are provided by NADPH via a two-protein mitochondrial transfer system comprising flavoprotein FDXR (adrenodoxin/ferredoxin reductase) and nonheme iron-sulfur protein FDX1 or FDX2 (adrenodoxin/ferredoxin). This is Cytochrome P450 27C1 from Homo sapiens (Human).